Here is a 600-residue protein sequence, read N- to C-terminus: Proline--tRNA ligase (600 aa).

The protein belongs to the class-II aminoacyl-tRNA synthetase family. ProS type 1 subfamily. Homodimer.

The protein localises to the cytoplasm. It catalyses the reaction tRNA(Pro) + L-proline + ATP = L-prolyl-tRNA(Pro) + AMP + diphosphate. Functionally, catalyzes the attachment of proline to tRNA(Pro) in a two-step reaction: proline is first activated by ATP to form Pro-AMP and then transferred to the acceptor end of tRNA(Pro). As ProRS can inadvertently accommodate and process non-cognate amino acids such as alanine and cysteine, to avoid such errors it has two additional distinct editing activities against alanine. One activity is designated as 'pretransfer' editing and involves the tRNA(Pro)-independent hydrolysis of activated Ala-AMP. The other activity is designated 'posttransfer' editing and involves deacylation of mischarged Ala-tRNA(Pro). The misacylated Cys-tRNA(Pro) is not edited by ProRS. The polypeptide is Proline--tRNA ligase (Prochlorococcus marinus (strain MIT 9312)).